The chain runs to 209 residues: Large ribosomal subunit protein uL3 (209 aa).

The tract at residues 133–153 is disordered; it reads THGNSLSHRVPGSIGQNQTPG. Gln150 is modified (N5-methylglutamine).

It belongs to the universal ribosomal protein uL3 family. Part of the 50S ribosomal subunit. Forms a cluster with proteins L14 and L19. Post-translationally, methylated by PrmB.

One of the primary rRNA binding proteins, it binds directly near the 3'-end of the 23S rRNA, where it nucleates assembly of the 50S subunit. The sequence is that of Large ribosomal subunit protein uL3 from Pectobacterium carotovorum subsp. carotovorum (strain PC1).